Consider the following 258-residue polypeptide: Ribosome maturation factor RimP (258 aa).

Disordered regions lie at residues 48–88 and 212–258; these read PQRP…PTSA and IFKK…AEND. Basic residues predominate over residues 215-224; the sequence is KPQKPGKKPG.

This sequence belongs to the RimP family.

Its subcellular location is the cytoplasm. Required for maturation of 30S ribosomal subunits. The protein is Ribosome maturation factor RimP of Desulfovibrio desulfuricans (strain ATCC 27774 / DSM 6949 / MB).